A 580-amino-acid polypeptide reads, in one-letter code: Opioid growth factor receptor (580 aa).

At Met1 the chain carries N-acetylmethionine. Positions Met1–Ala38 are enriched in acidic residues. Disordered regions lie at residues Met1–Ser44 and Phe285–Val390. The Bipartite nuclear localization signal motif lies at Arg257–Lys286. The span at Ala300–Ser310 shows a compositional bias: basic and acidic residues. Ser327, Ser361, Ser365, and Ser403 each carry phosphoserine. Residues Asn352–Arg374 are compositionally biased toward basic and acidic residues. The interval Ile405–Pro580 is disordered. 8 consecutive repeat copies span residues Gly467–Val475, Gly476–Val484, Gly485–Val493, Gly494–Val502, Gly503–Val511, Gly512–Val520, Gly521–Val529, and Gly530–Val538. The interval Gly467–Val538 is 8 X approximate tandem repeats. A compositionally biased stretch (polar residues) spans Pro489 to Val538. Ser548 and Ser555 each carry phosphoserine.

Belongs to the opioid growth factor receptor family. As to expression, highly expressed in 6-day old cerebellum and brain. Lower expressed in adult cerebellum. The protein is detected in germinal cells of the cerebellum, in neurons of the deep cerebellar nuclei and in the glia in the medullary layer.

The protein resides in the cytoplasm. The protein localises to the perinuclear region. It is found in the nucleus. Receptor for opioid growth factor (OGF), also known as Met-enkephalin. Seems to be involved in growth regulation. This Rattus norvegicus (Rat) protein is Opioid growth factor receptor (Ogfr).